A 560-amino-acid chain; its full sequence is MKEAIIEWKDFSFRYETQQEPTLQGIDLTIYKGEKVLIVGPSGSGKSTLGQCLNGIIPNIYKGQTYGEFLIKGQVAFDMSIYDKSHLVSTVLQDTDGQFIGLSVAEDLAFALENDVTALDEMKGRVYKWAEKLDLLPLLDQRPQDLSGGQKQRVSLAGVLIDESPILLFDEPLANLDPKSGQDIIELIDQIHKEEGTTTLIIEHRLEDVLHRPVDRIVLINDGRILFNGSPDQLLATDLLTQNGIREPLYLTTLRQLGVDLVKEEQLANLDNLSISKGQVQLQNELAKETPALQSLFRLEEVSFSYDDRPILKSLHLDIKKGEKIAIVGKNGAGKSTLAKAISSFIQTEGRYLWEKQDIKGDSVAERAERVGYVLQNPNQMISTNMIFDEVALGLRLRGVDEKEIETRVYETLKICGLYEFRNWPISALSFGQKKRVTIASILVLGAEIILLDEPTAGQDQKNYTEIMEFLEELHQKGHTIVMITHDMQLMLDYSDRVLVMVDGELIADTVPASLLSDPELLVKANLKETSIFNLAKKLDVDPLDLTAFYKERREGCKLN.

ABC transporter domains lie at 6–247 (IEWK…GIRE) and 297–528 (FRLE…ANLK). ATP contacts are provided by residues 40-47 (GPSGSGKS) and 329-336 (GKNGAGKS).

This sequence belongs to the ABC transporter superfamily.

The protein localises to the cell membrane. Its function is as follows. Probably part of an ABC transporter complex. Responsible for energy coupling to the transport system. The protein is Putative ABC transporter ATP-binding protein SP_0483 of Streptococcus pneumoniae serotype 4 (strain ATCC BAA-334 / TIGR4).